Here is a 309-residue protein sequence, read N- to C-terminus: Ornithine carbamoyltransferase (309 aa).

Residues 57–60 (STRT), Gln84, Arg108, and 135–138 (HPCQ) contribute to the carbamoyl phosphate site. Residues Asn166, Asp224, and 228–229 (SM) contribute to the L-ornithine site. Residues 264–265 (CL) and Arg292 contribute to the carbamoyl phosphate site.

The protein belongs to the aspartate/ornithine carbamoyltransferase superfamily. OTCase family.

Its subcellular location is the cytoplasm. The enzyme catalyses carbamoyl phosphate + L-ornithine = L-citrulline + phosphate + H(+). Its pathway is amino-acid biosynthesis; L-arginine biosynthesis; L-arginine from L-ornithine and carbamoyl phosphate: step 1/3. Reversibly catalyzes the transfer of the carbamoyl group from carbamoyl phosphate (CP) to the N(epsilon) atom of ornithine (ORN) to produce L-citrulline. The polypeptide is Ornithine carbamoyltransferase (Paracidovorax citrulli (strain AAC00-1) (Acidovorax citrulli)).